A 242-amino-acid chain; its full sequence is ATP-dependent dethiobiotin synthetase BioD (242 aa).

Position 12–17 (12–17 (EVGKTV)) interacts with ATP. T16 is a Mg(2+) binding site. K37 is a catalytic residue. S41 is a binding site for substrate. Residues D51 and 112 to 115 (EGAG) contribute to the ATP site. Residues D51 and E112 each coordinate Mg(2+).

The protein belongs to the dethiobiotin synthetase family. In terms of assembly, homodimer. Mg(2+) serves as cofactor.

The protein localises to the cytoplasm. The catalysed reaction is (7R,8S)-7,8-diammoniononanoate + CO2 + ATP = (4R,5S)-dethiobiotin + ADP + phosphate + 3 H(+). It participates in cofactor biosynthesis; biotin biosynthesis; biotin from 7,8-diaminononanoate: step 1/2. In terms of biological role, catalyzes a mechanistically unusual reaction, the ATP-dependent insertion of CO2 between the N7 and N8 nitrogen atoms of 7,8-diaminopelargonic acid (DAPA, also called 7,8-diammoniononanoate) to form a ureido ring. The protein is ATP-dependent dethiobiotin synthetase BioD of Bacillus anthracis (strain A0248).